We begin with the raw amino-acid sequence, 313 residues long: Glyoxylate/hydroxypyruvate reductase A (313 aa).

Residue arginine 228 is part of the active site. The active-site Proton donor is the histidine 276.

The protein belongs to the D-isomer specific 2-hydroxyacid dehydrogenase family. GhrA subfamily.

The protein resides in the cytoplasm. The enzyme catalyses glycolate + NADP(+) = glyoxylate + NADPH + H(+). It catalyses the reaction (R)-glycerate + NAD(+) = 3-hydroxypyruvate + NADH + H(+). It carries out the reaction (R)-glycerate + NADP(+) = 3-hydroxypyruvate + NADPH + H(+). In terms of biological role, catalyzes the NADPH-dependent reduction of glyoxylate and hydroxypyruvate into glycolate and glycerate, respectively. This is Glyoxylate/hydroxypyruvate reductase A from Photorhabdus laumondii subsp. laumondii (strain DSM 15139 / CIP 105565 / TT01) (Photorhabdus luminescens subsp. laumondii).